The sequence spans 250 residues: tRNA (guanine-N(1)-)-methyltransferase (250 aa).

S-adenosyl-L-methionine contacts are provided by residues Gly116 and 136-141 (IGDYVL).

It belongs to the RNA methyltransferase TrmD family. In terms of assembly, homodimer.

It is found in the cytoplasm. It carries out the reaction guanosine(37) in tRNA + S-adenosyl-L-methionine = N(1)-methylguanosine(37) in tRNA + S-adenosyl-L-homocysteine + H(+). In terms of biological role, specifically methylates guanosine-37 in various tRNAs. This Pseudomonas savastanoi pv. phaseolicola (strain 1448A / Race 6) (Pseudomonas syringae pv. phaseolicola (strain 1448A / Race 6)) protein is tRNA (guanine-N(1)-)-methyltransferase.